The following is a 660-amino-acid chain: Putative ABC transporter ATP-binding MG390 (660 aa).

Residues 6-126 (QEQQNECGIC…KLWTGYAATV (121 aa)) form the Peptidase C39 domain. Residue C12 is part of the active site. 6 helical membrane-spanning segments follow: residues 150–170 (LVTF…LLAT), 188–208 (LVVL…LQVI), 265–285 (YIPN…LIGI), 290–310 (FLLI…YDFF), 379–399 (SFFQ…GIIE), and 402–422 (YQLS…TYAT). The ABC transporter domain occupies 464-657 (ISLENLSVTL…QNKINLTNYL (194 aa)). 494–501 (GQNGSGKS) contributes to the ATP binding site.

Belongs to the ABC transporter superfamily.

Its subcellular location is the cell membrane. The sequence is that of Putative ABC transporter ATP-binding MG390 from Mycoplasma genitalium (strain ATCC 33530 / DSM 19775 / NCTC 10195 / G37) (Mycoplasmoides genitalium).